The sequence spans 344 residues: Ubiquitin-associated domain-containing protein 2 (344 aa).

The first 35 residues, Met1–Pro35, serve as a signal peptide directing secretion. The Extracellular segment spans residues His36 to Lys91. A helical membrane pass occupies residues Phe92–Glu112. Topologically, residues Ala113 to Asn125 are cytoplasmic. The chain crosses the membrane as a helical span at residues Leu126–Pro146. The Extracellular portion of the chain corresponds to Arg147–Thr163. N-linked (GlcNAc...) asparagine glycosylation occurs at Asn161. Residues Leu164–Ile184 form a helical membrane-spanning segment. Topologically, residues Ser185–His344 are cytoplasmic. The UBA domain occupies Glu304–His344.

As to quaternary structure, interacts with FAF2. Interacts with LMBR1L. Interacts with AMFR and VCP.

It localises to the endoplasmic reticulum membrane. Restricts trafficking of FAF2 from the endoplasmic reticulum to lipid droplets. In association with LMBR1L and E3 ubiquitin-protein ligase AMFR, negatively regulates the canonical Wnt signaling pathway in the lymphocytes by promoting the ubiquitin-mediated degradation of CTNNB1 and Wnt receptors FZD6 and LRP6. This Homo sapiens (Human) protein is Ubiquitin-associated domain-containing protein 2 (UBAC2).